Consider the following 455-residue polypeptide: Exodeoxyribonuclease 7 large subunit (455 aa).

It belongs to the XseA family. In terms of assembly, heterooligomer composed of large and small subunits.

It is found in the cytoplasm. The catalysed reaction is Exonucleolytic cleavage in either 5'- to 3'- or 3'- to 5'-direction to yield nucleoside 5'-phosphates.. In terms of biological role, bidirectionally degrades single-stranded DNA into large acid-insoluble oligonucleotides, which are then degraded further into small acid-soluble oligonucleotides. This Escherichia coli O7:K1 (strain IAI39 / ExPEC) protein is Exodeoxyribonuclease 7 large subunit.